A 442-amino-acid chain; its full sequence is UDP-N-acetylmuramate--L-alanine ligase (442 aa).

Residue 109 to 115 participates in ATP binding; it reads GAHGKTS.

It belongs to the MurCDEF family.

It localises to the cytoplasm. The enzyme catalyses UDP-N-acetyl-alpha-D-muramate + L-alanine + ATP = UDP-N-acetyl-alpha-D-muramoyl-L-alanine + ADP + phosphate + H(+). It participates in cell wall biogenesis; peptidoglycan biosynthesis. Its function is as follows. Cell wall formation. This Streptococcus pyogenes serotype M6 (strain ATCC BAA-946 / MGAS10394) protein is UDP-N-acetylmuramate--L-alanine ligase.